Here is a 234-residue protein sequence, read N- to C-terminus: MFSQIVLLLSAFIYVVSATARRGTIKGRLDLAASNITGFVSTRTSFKLYQIGNFSTEYPYTSTTMFQDDEGNFEFANLPLNDGVNETTYYVMYPASMDFNLKPNRILIEFKNLENGTLQLNAFKNFFGREYFPSKDITYPEKLQSMKVHPYITVELLHKAPIRSYLQARNVSIFSTGIVGNILNSRWKLAGVITLIALVVFPIIVEKLDPETARAIREEAKRKQREKYAAVASK.

The N-terminal stretch at 1–18 (MFSQIVLLLSAFIYVVSA) is a signal peptide. Over 19-188 (TARRGTIKGR…VGNILNSRWK (170 aa)) the chain is Lumenal. N35, N53, N85, N115, and N170 each carry an N-linked (GlcNAc...) asparagine glycan. The helical transmembrane segment at 189 to 209 (LAGVITLIALVVFPIIVEKLD) threads the bilayer. Residues 210–234 (PETARAIREEAKRKQREKYAAVASK) are Cytoplasmic-facing.

This sequence belongs to the SOP4 family.

The protein localises to the endoplasmic reticulum membrane. Involved in the export of PMA1, possibly through the monitoring or assisting of PMA1 folding and acquisition of competence to enter vesicles. This is Protein SOP4 (SOP4) from Saccharomyces cerevisiae (strain YJM789) (Baker's yeast).